The primary structure comprises 214 residues: rRNA methyltransferase 2, mitochondrial (214 aa).

Residues 1 to 18 constitute a mitochondrion transit peptide; sequence MFSTKKSQGNLHKYIQRQ. Residues 63–66, Asp-83, 100–101, and Asp-125 contribute to the S-adenosyl-L-methionine site; these read PGSW and DI. Residue Lys-169 is the Proton acceptor of the active site.

This sequence belongs to the class I-like SAM-binding methyltransferase superfamily. RNA methyltransferase RlmE family.

The protein localises to the mitochondrion. It catalyses the reaction a uridine in rRNA + S-adenosyl-L-methionine = a 2'-O-methyluridine in rRNA + S-adenosyl-L-homocysteine + H(+). In terms of biological role, S-adenosyl-L-methionine-dependent 2'-O-ribose methyltransferase that catalyzes the formation of 2'-O-methyluridine at position 808 (Um808) in the mitochondrial large subunit ribosomal RNA (mtLSU rRNA), a universally conserved modification in the peptidyl transferase domain of the mtLSU rRNA. This activity may require prior 2'-O-methylguanosine modification at position 809 (Gm809) by MRM3. Essential for late-stage assembly of mtLSU required for efficient translation of mitochondrial DNA encoded proteins; methyltransferase activity is not required for this function. Essential for mitochondrial respiratory function. The protein is rRNA methyltransferase 2, mitochondrial of Caenorhabditis elegans.